Consider the following 535-residue polypeptide: MSKNTKYVFVTGGVVSSLGKGITAASLGRLLKNRGLSVSIQKFDPYLNIDPGTMSPYQHGEVFVTDDGAETDLDLGHYERFIDENLTQNSNVTSGRVYWSVISKERKGEYLGGTVQVIPHITNAIKDRVHRVGKERDVDVVITEIGGTIGDIESLPFLEAIRQIKYDVGKENVCFIHVTLVPYLGKAGELKTKPTQHSVKELRSIGIQPDIIVCRSEKELSEDIKKKIGLFCNIDASEVIQNLDAEHLYAVPLMLHKEGLDRLVCEKLGLGCRDIDNAEWIDMVHRITHLTHTTKIALVGKYVELHDAYISVVEALNHGGLSNDTNVEIEWINAEDVTKENVDELLSGVDGVLVPGGFGDRGVEGKIEAIRWARENKKPFLGICLGMQCAVIEYARNVLGLEGAHSSELNPETPFPVIDLMPEQKDVEDLGGTMRLGLYPCKLEDNTFCKDVYASDLIYERHRHRYEFNNEYRTQLIESGLTIAGTSPDGRLVECVEVKDHPWFVAVQYHPELKSRPNRPHPLFVGFVGAALNNK.

Positions 1 to 270 (MSKNTKYVFV…DRLVCEKLGL (270 aa)) are amidoligase domain. CTP is bound at residue Ser-16. Ser-16 lines the UTP pocket. ATP is bound at residue 17-22 (SLGKGI). Tyr-57 is a binding site for L-glutamine. Asp-74 provides a ligand contact to ATP. Mg(2+) contacts are provided by Asp-74 and Glu-144. Residues 151-153 (DIE), 191-196 (KTKPTQ), and Lys-227 each bind CTP. UTP contacts are provided by residues 191–196 (KTKPTQ) and Lys-227. The Glutamine amidotransferase type-1 domain occupies 295–535 (KIALVGKYVE…GFVGAALNNK (241 aa)). Gly-357 contacts L-glutamine. Cys-384 (nucleophile; for glutamine hydrolysis) is an active-site residue. Residues 385–388 (LGMQ), Glu-408, and Arg-465 each bind L-glutamine. Active-site residues include His-510 and Glu-512.

Belongs to the CTP synthase family. In terms of assembly, homotetramer.

The enzyme catalyses UTP + L-glutamine + ATP + H2O = CTP + L-glutamate + ADP + phosphate + 2 H(+). It catalyses the reaction L-glutamine + H2O = L-glutamate + NH4(+). The catalysed reaction is UTP + NH4(+) + ATP = CTP + ADP + phosphate + 2 H(+). It functions in the pathway pyrimidine metabolism; CTP biosynthesis via de novo pathway; CTP from UDP: step 2/2. With respect to regulation, allosterically activated by GTP, when glutamine is the substrate; GTP has no effect on the reaction when ammonia is the substrate. The allosteric effector GTP functions by stabilizing the protein conformation that binds the tetrahedral intermediate(s) formed during glutamine hydrolysis. Inhibited by the product CTP, via allosteric rather than competitive inhibition. Functionally, catalyzes the ATP-dependent amination of UTP to CTP with either L-glutamine or ammonia as the source of nitrogen. Regulates intracellular CTP levels through interactions with the four ribonucleotide triphosphates. This is CTP synthase from Clostridium perfringens (strain ATCC 13124 / DSM 756 / JCM 1290 / NCIMB 6125 / NCTC 8237 / Type A).